Reading from the N-terminus, the 192-residue chain is Imidazoleglycerol-phosphate dehydratase (192 aa).

The protein belongs to the imidazoleglycerol-phosphate dehydratase family.

The protein resides in the cytoplasm. The enzyme catalyses D-erythro-1-(imidazol-4-yl)glycerol 3-phosphate = 3-(imidazol-4-yl)-2-oxopropyl phosphate + H2O. It participates in amino-acid biosynthesis; L-histidine biosynthesis; L-histidine from 5-phospho-alpha-D-ribose 1-diphosphate: step 6/9. This Staphylococcus epidermidis (strain ATCC 35984 / DSM 28319 / BCRC 17069 / CCUG 31568 / BM 3577 / RP62A) protein is Imidazoleglycerol-phosphate dehydratase.